The chain runs to 981 residues: Serine/threonine-protein kinase D1044.8 (981 aa).

The region spanning 453–725 is the Protein kinase domain; the sequence is YELLDQLGAG…MCGVRLLEYL (273 aa). Residues 459-467 and lysine 488 contribute to the ATP site; that span reads LGAGAFGCV. The active-site Proton acceptor is aspartate 591. Residues 735–746 show a composition bias toward polar residues; it reads TSDMTASQSSYN. Disordered stretches follow at residues 735-802 and 823-847; these read TSDM…PSSI and IPSR…TELK. Residues 752–762 are compositionally biased toward low complexity; it reads SPSSLNSSTSS. Polar residues predominate over residues 830 to 847; it reads QTCSTEHPARSSSSTELK.

Belongs to the protein kinase superfamily. NEK Ser/Thr protein kinase family. NIMA subfamily. Mg(2+) serves as cofactor.

It catalyses the reaction L-seryl-[protein] + ATP = O-phospho-L-seryl-[protein] + ADP + H(+). It carries out the reaction L-threonyl-[protein] + ATP = O-phospho-L-threonyl-[protein] + ADP + H(+). The polypeptide is Serine/threonine-protein kinase D1044.8 (nekl-4) (Caenorhabditis elegans).